We begin with the raw amino-acid sequence, 544 residues long: Dynein axonemal assembly factor 3 (544 aa).

Disordered stretches follow at residues 328–350 (RAAEGDPEQVQGGAEGSSEPAAP) and 448–544 (TFAR…YPIP). Residues 522–536 (PTGSQAPKSENQTVP) are compositionally biased toward polar residues.

Belongs to the DNAAF3 family.

The protein localises to the cytoplasm. Its subcellular location is the dynein axonemal particle. Its function is as follows. Required for the assembly of axonemal inner and outer dynein arms. Involved in preassembly of dyneins into complexes before their transport into cilia. The protein is Dynein axonemal assembly factor 3 (DNAAF3) of Bos taurus (Bovine).